Reading from the N-terminus, the 403-residue chain is Lipase lipl-5 (403 aa).

The first 18 residues, 1 to 18, serve as a signal peptide directing secretion; that stretch reads MWRFAVFLAAFFVQDVVG. N-linked (GlcNAc...) asparagine glycosylation occurs at N64. The active-site Nucleophile is S167. An N-linked (GlcNAc...) asparagine glycan is attached at N271. Active-site charge relay system residues include D343 and H375.

The protein belongs to the AB hydrolase superfamily. Lipase family.

It localises to the lysosome lumen. The protein localises to the secreted. Its function is as follows. Lipase involved in lipid homeostasis. Regulates mitochondrial lipid composition, in particular cardiolipins and coenzyme Q-9 levels, in response to nutrient availability. Does not affect global triglyceride levels in response to nutrient availability. However, in coelomocytes, specifically promotes triglyceride catabolism and lifespan extension in response to nutrient deprivation. This Caenorhabditis elegans protein is Lipase lipl-5.